A 277-amino-acid polypeptide reads, in one-letter code: Large ribosomal subunit protein uL2 (277 aa).

2 disordered regions span residues 24 to 55 (ITTS…RHHG) and 221 to 277 (RGSV…RKKK).

Belongs to the universal ribosomal protein uL2 family. Part of the 50S ribosomal subunit. Forms a bridge to the 30S subunit in the 70S ribosome.

In terms of biological role, one of the primary rRNA binding proteins. Required for association of the 30S and 50S subunits to form the 70S ribosome, for tRNA binding and peptide bond formation. It has been suggested to have peptidyltransferase activity; this is somewhat controversial. Makes several contacts with the 16S rRNA in the 70S ribosome. The protein is Large ribosomal subunit protein uL2 of Listeria innocua serovar 6a (strain ATCC BAA-680 / CLIP 11262).